Reading from the N-terminus, the 49-residue chain is Large ribosomal subunit protein bL33A (49 aa).

It belongs to the bacterial ribosomal protein bL33 family.

The chain is Large ribosomal subunit protein bL33A from Staphylococcus aureus (strain Mu3 / ATCC 700698).